The chain runs to 103 residues: Large ribosomal subunit protein uL24 (103 aa).

The protein belongs to the universal ribosomal protein uL24 family. Part of the 50S ribosomal subunit.

In terms of biological role, one of two assembly initiator proteins, it binds directly to the 5'-end of the 23S rRNA, where it nucleates assembly of the 50S subunit. Functionally, one of the proteins that surrounds the polypeptide exit tunnel on the outside of the subunit. In Actinobacillus pleuropneumoniae serotype 3 (strain JL03), this protein is Large ribosomal subunit protein uL24.